Consider the following 446-residue polypeptide: Chromosomal replication initiator protein DnaA (446 aa).

Residues 1–73 (MAAQLNELWQ…INSMKIITTK (73 aa)) are domain I, interacts with DnaA modulators. The interval 73-107 (KKYDIAFLISSEEALETDEDQETDTNNVNTDTSSS) is domain II. Residues 108 to 324 (MLNPKYKFDS…GALIRIVAFS (217 aa)) are domain III, AAA+ region. ATP is bound by residues Gly-152, Gly-154, Lys-155, and Thr-156. The segment at 325-446 (SLTNKEISVD…NEITKRFSPK (122 aa)) is domain IV, binds dsDNA.

This sequence belongs to the DnaA family. In terms of assembly, oligomerizes as a right-handed, spiral filament on DNA at oriC.

The protein localises to the cytoplasm. Plays an essential role in the initiation and regulation of chromosomal replication. ATP-DnaA binds to the origin of replication (oriC) to initiate formation of the DNA replication initiation complex once per cell cycle. Binds the DnaA box (a 9 base pair repeat at the origin) and separates the double-stranded (ds)DNA. Forms a right-handed helical filament on oriC DNA; dsDNA binds to the exterior of the filament while single-stranded (ss)DNA is stabiized in the filament's interior. The ATP-DnaA-oriC complex binds and stabilizes one strand of the AT-rich DNA unwinding element (DUE), permitting loading of DNA polymerase. After initiation quickly degrades to an ADP-DnaA complex that is not apt for DNA replication. Binds acidic phospholipids. The chain is Chromosomal replication initiator protein DnaA from Clostridium acetobutylicum (strain ATCC 824 / DSM 792 / JCM 1419 / IAM 19013 / LMG 5710 / NBRC 13948 / NRRL B-527 / VKM B-1787 / 2291 / W).